The primary structure comprises 827 residues: Putative potassium transporter 12 (827 aa).

Residues 1 to 31 (MEEIEEGSSNNSIRRVGTGSSDRRWVDGSEV) are disordered. Residues 1-82 (MEEIEEGSSN…AGSHGHNLKD (82 aa)) lie on the Cytoplasmic side of the membrane. Residues 83–103 (LSLLTTLGIAFQTLGVVYGDM) form a helical membrane-spanning segment. Residues 104-129 (GTSPLYVFSDVFSKVPIRSEVDVLGA) are Extracellular-facing. The chain crosses the membrane as a helical span at residues 130 to 150 (LSLVIYTIAVIPLAKYVFVVL). Residues 151-216 (KANDNGEGGT…ALETKGYLKT (66 aa)) are Cytoplasmic-facing. The chain crosses the membrane as a helical span at residues 217 to 237 (LLLLLVLMGTSMIIGDGILTP). Topologically, residues 238–253 (AMSVMSAMSGLQGEVK) are extracellular. The chain crosses the membrane as a helical span at residues 254–274 (GFGTNALVMSSIVILVALFSI). The Cytoplasmic segment spans residues 275 to 281 (QRFGTGK). The chain crosses the membrane as a helical span at residues 282–302 (VGFLFAPVLALWFFSLGAIGI). At 303 to 335 (YNLLKYDFTVIRALNPFYIVLFFNKNSKQAWSA) the chain is on the extracellular side. The chain crosses the membrane as a helical span at residues 336–356 (LGGCVLCITGAEAMFADLGHF). Topologically, residues 357–363 (SVRSIQM) are cytoplasmic. The helical transmembrane segment at 364 to 384 (AFTCVVFPCLLLAYMGQAAYL) threads the bilayer. The Extracellular segment spans residues 385–402 (TKHPEASARIFYDSVPKS). A helical membrane pass occupies residues 403-423 (LFWPVFVIATLAAMIASQAMI). At 424–454 (SATFSCVKQAMALGCFPRLKIIHTSKKRIGQ) the chain is on the cytoplasmic side. Residues 455–475 (IYIPVINWFLMIMCILVVSIF) traverse the membrane as a helical segment. Residues 476–480 (RSTTH) lie on the Extracellular side of the membrane. 2 helical membrane-spanning segments follow: residues 481–501 (IANAYGIAEVGVMMVSTVLVT) and 502–522 (LVMLLIWQTNIFLALCFPLIF). At 523 to 536 (GSVETIYLLAVLTK) the chain is on the extracellular side. A helical transmembrane segment spans residues 537–557 (ILEGGWVPLVFATFFLTVMYI). Over 558–827 (WNYGSVLKYQ…ILQAGMTYMV (270 aa)) the chain is Cytoplasmic. The segment at 728–750 (RSEPEQELDSEVLPSSSVGSSME) is disordered. Positions 738 to 748 (EVLPSSSVGSS) are enriched in low complexity.

Belongs to the HAK/KUP transporter (TC 2.A.72.3) family.

It localises to the cell membrane. In terms of biological role, putative potassium transporter. The sequence is that of Putative potassium transporter 12 (POT12) from Arabidopsis thaliana (Mouse-ear cress).